Here is a 318-residue protein sequence, read N- to C-terminus: Glycine--tRNA ligase alpha subunit (318 aa).

Belongs to the class-II aminoacyl-tRNA synthetase family. Tetramer of two alpha and two beta subunits.

The protein resides in the cytoplasm. The catalysed reaction is tRNA(Gly) + glycine + ATP = glycyl-tRNA(Gly) + AMP + diphosphate. This chain is Glycine--tRNA ligase alpha subunit, found in Chelativorans sp. (strain BNC1).